The following is a 306-amino-acid chain: Agmatinase (306 aa).

Residues His126, Asp149, His151, Asp153, Asp230, and Asp232 each contribute to the Mn(2+) site.

It belongs to the arginase family. Agmatinase subfamily. Requires Mn(2+) as cofactor.

It carries out the reaction agmatine + H2O = urea + putrescine. It functions in the pathway amine and polyamine biosynthesis; putrescine biosynthesis via agmatine pathway; putrescine from agmatine: step 1/1. Its function is as follows. Catalyzes the formation of putrescine from agmatine. This is Agmatinase from Cronobacter sakazakii (strain ATCC BAA-894) (Enterobacter sakazakii).